The sequence spans 428 residues: Adenylosuccinate synthetase (428 aa).

GTP is bound by residues 12–18 and 40–42; these read GDEGKGK and GHT. Catalysis depends on aspartate 13, which acts as the Proton acceptor. Residues aspartate 13 and glycine 40 each contribute to the Mg(2+) site. Residues 13–16, 38–41, threonine 128, arginine 142, glutamine 223, threonine 238, and arginine 302 contribute to the IMP site; these read DEGK and NAGH. The active-site Proton donor is the histidine 41. 298–304 is a binding site for substrate; the sequence is VTTKRPR. GTP-binding positions include arginine 304, 330–332, and 412–414; these read KLD and GVG.

This sequence belongs to the adenylosuccinate synthetase family. Homodimer. Mg(2+) serves as cofactor.

It localises to the cytoplasm. The enzyme catalyses IMP + L-aspartate + GTP = N(6)-(1,2-dicarboxyethyl)-AMP + GDP + phosphate + 2 H(+). Its pathway is purine metabolism; AMP biosynthesis via de novo pathway; AMP from IMP: step 1/2. Its function is as follows. Plays an important role in the de novo pathway of purine nucleotide biosynthesis. Catalyzes the first committed step in the biosynthesis of AMP from IMP. This chain is Adenylosuccinate synthetase, found in Cutibacterium acnes (strain DSM 16379 / KPA171202) (Propionibacterium acnes).